Reading from the N-terminus, the 753-residue chain is Polyribonucleotide nucleotidyltransferase (753 aa).

Residues aspartate 543 and aspartate 549 each coordinate Mg(2+). A KH domain is found at 609 to 668 (PRITTVKIPVAKIGELIGPKGKNINALTEETGANISIEDDGTVFISAADGASAEAAIEKI). In terms of domain architecture, S1 motif spans 680–749 (GERFLGTVVK…NRGKISLVPV (70 aa)).

It belongs to the polyribonucleotide nucleotidyltransferase family. Mg(2+) is required as a cofactor.

Its subcellular location is the cytoplasm. It catalyses the reaction RNA(n+1) + phosphate = RNA(n) + a ribonucleoside 5'-diphosphate. Functionally, involved in mRNA degradation. Catalyzes the phosphorolysis of single-stranded polyribonucleotides processively in the 3'- to 5'-direction. In Corynebacterium glutamicum (strain ATCC 13032 / DSM 20300 / JCM 1318 / BCRC 11384 / CCUG 27702 / LMG 3730 / NBRC 12168 / NCIMB 10025 / NRRL B-2784 / 534), this protein is Polyribonucleotide nucleotidyltransferase.